The chain runs to 401 residues: Mannan endo-1,4-beta-mannosidase 3 (401 aa).

The N-terminal stretch at 1-24 (MSYTHRRSCISGLFLLLLALSCEA) is a signal peptide. The substrate site is built by tryptophan 84 and asparagine 198. Catalysis depends on glutamate 199, which acts as the Proton donor. Residue tyrosine 277 participates in substrate binding. Glutamate 317 serves as the catalytic Nucleophile. Tryptophan 356 contacts substrate.

Belongs to the glycosyl hydrolase 5 (cellulase A) family.

The protein localises to the secreted. It carries out the reaction Random hydrolysis of (1-&gt;4)-beta-D-mannosidic linkages in mannans, galactomannans and glucomannans.. The protein is Mannan endo-1,4-beta-mannosidase 3 (MAN3) of Solanum lycopersicum (Tomato).